A 196-amino-acid chain; its full sequence is MINKIHGKVIEKKESSLVLMTTVFEFELLVSAFCLANFKLSDKVELFTYLYARENELKLFGFLNSDERETFKSLIGVSGIGPRAALRVLSNIRYNDFKEAIDREDVELVSKIKGIGKKMAGKMFLHLQGKLLINNELESSLFGFKELEESIVSMGFDRKIVNSKLKEACDLIEFSNLKDSEKEQFLFKEVLKRMSN.

A domain I region spans residues 1–63; the sequence is MINKIHGKVI…ENELKLFGFL (63 aa). The segment at 64–139 is domain II; sequence NSDERETFKS…KLLINNELES (76 aa). Residue S139 is a region of interest, flexible linker. The interval 139–196 is domain III; the sequence is SSLFGFKELEESIVSMGFDRKIVNSKLKEACDLIEFSNLKDSEKEQFLFKEVLKRMSN.

Belongs to the RuvA family. In terms of assembly, homotetramer. Forms an RuvA(8)-RuvB(12)-Holliday junction (HJ) complex. HJ DNA is sandwiched between 2 RuvA tetramers; dsDNA enters through RuvA and exits via RuvB. An RuvB hexamer assembles on each DNA strand where it exits the tetramer. Each RuvB hexamer is contacted by two RuvA subunits (via domain III) on 2 adjacent RuvB subunits; this complex drives branch migration. In the full resolvosome a probable DNA-RuvA(4)-RuvB(12)-RuvC(2) complex forms which resolves the HJ.

It localises to the cytoplasm. Its function is as follows. The RuvA-RuvB-RuvC complex processes Holliday junction (HJ) DNA during genetic recombination and DNA repair, while the RuvA-RuvB complex plays an important role in the rescue of blocked DNA replication forks via replication fork reversal (RFR). RuvA specifically binds to HJ cruciform DNA, conferring on it an open structure. The RuvB hexamer acts as an ATP-dependent pump, pulling dsDNA into and through the RuvAB complex. HJ branch migration allows RuvC to scan DNA until it finds its consensus sequence, where it cleaves and resolves the cruciform DNA. This Borrelia garinii subsp. bavariensis (strain ATCC BAA-2496 / DSM 23469 / PBi) (Borreliella bavariensis) protein is Holliday junction branch migration complex subunit RuvA.